The sequence spans 367 residues: UDP-N-acetylglucosamine--N-acetylmuramyl-(pentapeptide) pyrophosphoryl-undecaprenol N-acetylglucosamine transferase (367 aa).

UDP-N-acetyl-alpha-D-glucosamine is bound by residues 15–17, asparagine 127, arginine 163, serine 191, isoleucine 249, and glutamine 294; that span reads TGG.

Belongs to the glycosyltransferase 28 family. MurG subfamily.

The protein localises to the cell inner membrane. The catalysed reaction is di-trans,octa-cis-undecaprenyl diphospho-N-acetyl-alpha-D-muramoyl-L-alanyl-D-glutamyl-meso-2,6-diaminopimeloyl-D-alanyl-D-alanine + UDP-N-acetyl-alpha-D-glucosamine = di-trans,octa-cis-undecaprenyl diphospho-[N-acetyl-alpha-D-glucosaminyl-(1-&gt;4)]-N-acetyl-alpha-D-muramoyl-L-alanyl-D-glutamyl-meso-2,6-diaminopimeloyl-D-alanyl-D-alanine + UDP + H(+). It participates in cell wall biogenesis; peptidoglycan biosynthesis. Functionally, cell wall formation. Catalyzes the transfer of a GlcNAc subunit on undecaprenyl-pyrophosphoryl-MurNAc-pentapeptide (lipid intermediate I) to form undecaprenyl-pyrophosphoryl-MurNAc-(pentapeptide)GlcNAc (lipid intermediate II). The protein is UDP-N-acetylglucosamine--N-acetylmuramyl-(pentapeptide) pyrophosphoryl-undecaprenol N-acetylglucosamine transferase of Burkholderia vietnamiensis (strain G4 / LMG 22486) (Burkholderia cepacia (strain R1808)).